A 447-amino-acid polypeptide reads, in one-letter code: Probable rhamnogalacturonase C (447 aa).

A signal peptide spans 1–19; the sequence is MQVKLFYTLALWAPILVSA. Residues N37 and N65 are each glycosylated (N-linked (GlcNAc...) asparagine). An intrachain disulfide couples C40 to C66. D217 functions as the Proton donor in the catalytic mechanism. A disulfide bridge links C219 with C236. Residues N237 and N252 are each glycosylated (N-linked (GlcNAc...) asparagine). The active site involves H291. A glycan (N-linked (GlcNAc...) asparagine) is linked at N316. Cystine bridges form between C338-C344 and C366-C375.

The protein belongs to the glycosyl hydrolase 28 family.

It is found in the secreted. In terms of biological role, pectinolytic enzymes consist of four classes of enzymes: pectine lyase, polygalacturonase, pectin methylesterase and rhamnogalacturonase. Hydrolyzes alpha-D-galacturonopyranosyl-(1,2)-alpha-L-rhamnopyranosyl linkages in the backbone of the hairy regions of pectins. The sequence is that of Probable rhamnogalacturonase C (rhgC) from Aspergillus flavus (strain ATCC 200026 / FGSC A1120 / IAM 13836 / NRRL 3357 / JCM 12722 / SRRC 167).